The chain runs to 117 residues: Immunoglobulin heavy variable 5-51 (117 aa).

Residues 1 to 19 form the signal peptide; it reads MGSTAILALLLAVLQGVCA. Positions 20-44 are framework-1; it reads EVQLVQSGAEVKKPGESLKISCKGS. The 98-residue stretch at 20-117 folds into the Ig-like domain; that stretch reads EVQLVQSGAE…SDTAMYYCAR (98 aa). Cysteines 41 and 115 form a disulfide. The complementarity-determining-1 stretch occupies residues 45-52; the sequence is GYSFTSYW. The framework-2 stretch occupies residues 53–69; that stretch reads IGWVRQMPGKGLEWMGI. The tract at residues 70–77 is complementarity-determining-2; sequence IYPGDSDT. The segment at 78–115 is framework-3; sequence RYSPSFQGQVTISADKSISTAYLQWSSLKASDTAMYYC. The tract at residues 116–117 is complementarity-determining-3; the sequence is AR.

In terms of assembly, immunoglobulins are composed of two identical heavy chains and two identical light chains; disulfide-linked.

The protein localises to the secreted. Its subcellular location is the cell membrane. In terms of biological role, v region of the variable domain of immunoglobulin heavy chains that participates in the antigen recognition. Immunoglobulins, also known as antibodies, are membrane-bound or secreted glycoproteins produced by B lymphocytes. In the recognition phase of humoral immunity, the membrane-bound immunoglobulins serve as receptors which, upon binding of a specific antigen, trigger the clonal expansion and differentiation of B lymphocytes into immunoglobulins-secreting plasma cells. Secreted immunoglobulins mediate the effector phase of humoral immunity, which results in the elimination of bound antigens. The antigen binding site is formed by the variable domain of one heavy chain, together with that of its associated light chain. Thus, each immunoglobulin has two antigen binding sites with remarkable affinity for a particular antigen. The variable domains are assembled by a process called V-(D)-J rearrangement and can then be subjected to somatic hypermutations which, after exposure to antigen and selection, allow affinity maturation for a particular antigen. The polypeptide is Immunoglobulin heavy variable 5-51 (Homo sapiens (Human)).